Consider the following 843-residue polypeptide: MPLSYQHFRKLLLLDDEAGPLEEELPRLADEGLNRRVAEDLNLGNLNVSIPWTHKVGNFTGLYSSTVPVFNSEWQTPSFPDIHLQEDIINRCQQFVGPLNVNEKRRLKLVMPARFFPNLTKYLPLDKGIKPYYPEHIVNHYFKTRHYLHTLWKAGILYKRETTRSASFCGSPYSWEQELQHGRLFFKTSKRHGDESFCSQSSGILARPSVGPCFRSQFKQSRLGLQPQQGPLARGLAGRSGSIRARVHPTTRQSFGVEPSGSGHIDNSASNSSSCLHQSAVRKAAYSHLSTSKRQSSSGHAVEFHNISSSSARSQSKGPILSCWWLQFRNSKPCSDYCLSHIVNLLEDWGPCTENGEHNIRIPRTPARVTGGVFLVDKNPHNTAESRLVVDFSQFSRGSTRVSWPKFAVPNLQSLTNLLSSNLSWLSLDVSAAFYHIPLHPAAMPHLLVGSSGLPRYVARLSSNSRNINNKHGTMQDLHDSCSRHLYVSLLLLYKTFGRKLHLYSHPIILGFRKIPMGVGLSPFLLAQFTSAICSVVRRAFPHCLAFSYMDDVVLGAKSVQHLESFFTSVTNFLLSLGIHLNPHKTKRWGYSLNFMGYVIGSWGTLPQEHIVLKIKKCFRKLPVNRPIDWKVCQRIVGLLGFAAPFTQCGYPALLPLYACIQAKQAFTFSPTYKAFLCKQYLNLYPVARQRSGLCQVFADATPTGWGLAMGHQRMRGTFVAPLPIHTAELLAACFARSRSGAKLIGTDNSVVLSRKYTSFPWLLGCAANWILRGTSFVYVPSALNPADDPSRGRLGLYRPLLRLPFRPTTGRTSLYAVSPSVPSHLPVRVHFASPLHVAWRPP.

The tract at residues 1–177 is terminal protein domain (TP); it reads MPLSYQHFRK…FCGSPYSWEQ (177 aa). The spacer stretch occupies residues 178–346; sequence ELQHGRLFFK…YCLSHIVNLL (169 aa). The interval 248–272 is disordered; sequence HPTTRQSFGVEPSGSGHIDNSASNS. A polymerase/reverse transcriptase domain (RT) region spans residues 347–690; it reads EDWGPCTENG…YLNLYPVARQ (344 aa). The 244-residue stretch at 357 to 600 folds into the Reverse transcriptase domain; it reads EHNIRIPRTP…YSLNFMGYVI (244 aa). Aspartate 429, aspartate 551, and aspartate 552 together coordinate Mg(2+).

It belongs to the hepadnaviridae P protein family.

It carries out the reaction DNA(n) + a 2'-deoxyribonucleoside 5'-triphosphate = DNA(n+1) + diphosphate. The catalysed reaction is Endonucleolytic cleavage to 5'-phosphomonoester.. Its activity is regulated as follows. Activated by host HSP70 and HSP40 in vitro to be able to bind the epsilon loop of the pgRNA. Because deletion of the RNase H region renders the protein partly chaperone-independent, the chaperones may be needed indirectly to relieve occlusion of the RNA-binding site by this domain. Inhibited by several reverse-transcriptase inhibitors: Lamivudine, Adefovir and Entecavir. Its function is as follows. Multifunctional enzyme that converts the viral RNA genome into dsDNA in viral cytoplasmic capsids. This enzyme displays a DNA polymerase activity that can copy either DNA or RNA templates, and a ribonuclease H (RNase H) activity that cleaves the RNA strand of RNA-DNA heteroduplexes in a partially processive 3'- to 5'-endonucleasic mode. Neo-synthesized pregenomic RNA (pgRNA) are encapsidated together with the P protein, and reverse-transcribed inside the nucleocapsid. Initiation of reverse-transcription occurs first by binding the epsilon loop on the pgRNA genome, and is initiated by protein priming, thereby the 5'-end of (-)DNA is covalently linked to P protein. Partial (+)DNA is synthesized from the (-)DNA template and generates the relaxed circular DNA (RC-DNA) genome. After budding and infection, the RC-DNA migrates in the nucleus, and is converted into a plasmid-like covalently closed circular DNA (cccDNA). The activity of P protein does not seem to be necessary for cccDNA generation, and is presumably released from (+)DNA by host nuclear DNA repair machinery. The chain is Protein P from Homo sapiens (Human).